The following is a 77-amino-acid chain: Omega-conotoxin TxVII (77 aa).

An N-terminal signal peptide occupies residues 1–22 (MKLTCMMIVAVLFLTAWTFATA). Positions 23-49 (DDSGNGLENLFPKAHHEMKNPEASKLN) are excised as a propeptide. 3 cysteine pairs are disulfide-bonded: Cys-52–Cys-67, Cys-59–Cys-71, and Cys-66–Cys-75.

In terms of tissue distribution, expressed by the venom duct.

The protein resides in the secreted. Functionally, omega-conotoxins act at presynaptic membranes, they bind and block voltage-gated calcium channels (Cav). Specifically acts on L-type channels. It blocks molluscan dihydropyridine-sensitive calcium channels. The chain is Omega-conotoxin TxVII from Conus textile (Cloth-of-gold cone).